A 268-amino-acid polypeptide reads, in one-letter code: Zinc finger protein SNAI2 (268 aa).

The interval 1-20 is SNAG domain; the sequence is MPRSFLVKKHFNASKKPNYS. Positions 84-116 are disordered; the sequence is GRVSPLPSSDTSSKDHSGSESPISDEEERLQPK. C2H2-type zinc fingers lie at residues 128-150, 159-181, 185-207, and 213-235; these read FQCN…KQLH, FSCK…IRTH, CVCK…IRTH, and FSCP…LQTH. The C2H2-type 5; atypical zinc-finger motif lies at 241-264; that stretch reads YQCKNCSKTFSRMSLLHKHEESGC.

The protein belongs to the snail C2H2-type zinc-finger protein family. As to quaternary structure, interacts (via SNAG domain) with LIMD1 (via LIM domains), WTIP (via LIM domains) and AJUBA (via LIM domains). Interacts (via zinc fingers) with KPNA2, KPNB1 and TNPO1. May interact (via zinc fingers) with IPO7. Post-translationally, phosphorylated by GSK3B. Once phosphorylated, it becomes a target for ubiquitination. In terms of processing, ubiquitinated by the SCF(FBXO11) complex; ubiquitination requires previous GSK3B-mediated SNAI2 phosphorylation.

It localises to the nucleus. It is found in the cytoplasm. Functionally, transcriptional repressor that modulates both activator-dependent and basal transcription. Involved in the generation and migration of neural crest cells. Plays a role in mediating RAF1-induced transcriptional repression of the TJ protein, occludin (OCLN) and subsequent oncogenic transformation of epithelial cells. Represses BRCA2 expression by binding to its E2-box-containing silencer and recruiting CTBP1 and HDAC1 in breast cells. In epidermal keratinocytes, binds to the E-box in ITGA3 promoter and represses its transcription. Involved in the regulation of ITGB1 and ITGB4 expression and cell adhesion and proliferation in epidermal keratinocytes. Binds to E-box2 domain of BSG and activates its expression during TGFB1-induced epithelial-mesenchymal transition (EMT) in hepatocytes. Represses E-Cadherin/CDH1 transcription via E-box elements. Involved in osteoblast maturation. Binds to RUNX2 and SOC9 promoters and may act as a positive and negative transcription regulator, respectively, in osteoblasts. Binds to CXCL12 promoter via E-box regions in mesenchymal stem cells and osteoblasts. Plays an essential role in TWIST1-induced EMT and its ability to promote invasion and metastasis. The chain is Zinc finger protein SNAI2 (Snai2) from Rattus norvegicus (Rat).